The chain runs to 360 residues: F-box protein SKP2A (360 aa).

An F-box domain is found at Ile-25 to Leu-71. Residues Ser-127 to Leu-128, Asn-149 to Gly-152, Asn-175 to Gly-178, and Asn-202 each bind (indol-3-yl)acetate.

In terms of assembly, part of a SCF (ASK-cullin-F-box) protein ligase complex. Interacts with CUL1 (RUB1-modified and non-modified isoforms), SKP1A, SKP1B and ASK18. Recruit DPB and phosphorylated E2FC. Interacts with auxin. Auxin controls the interaction with DPB. Post-translationally, polyubiquitinated and subsequently targeted to proteasome. Auxin promotes this ubiquitination-mediated degradation. In terms of tissue distribution, expressed in embryo, seedlings, hypocotyl, roots, leaves and flowers.

The protein resides in the nucleus. It functions in the pathway protein modification; protein ubiquitination. In terms of biological role, component of SCF(SKP2A) E3 ubiquitin ligase complexes, which mediate the ubiquitination and subsequent proteasomal degradation of target proteins (including cell cycle repressors). Acts as an auxin receptor; one active auxin is indole-3-acetate. Regulates the stability of the transcription factors E2FC and DPB, repressors of cell proliferation. Confers increase tolerance to osmotic stress by promoting cell division, especially in meristems. Promotes the formation of lateral root primordia. This chain is F-box protein SKP2A (SKP2A), found in Arabidopsis thaliana (Mouse-ear cress).